Reading from the N-terminus, the 213-residue chain is Imidazole glycerol phosphate synthase subunit HisH (213 aa).

Residues 4 to 211 (NLGVIDYGMG…LHWLHQGAEP (208 aa)) form the Glutamine amidotransferase type-1 domain. Residue Cys82 is the Nucleophile of the active site. Residues His186 and Glu188 contribute to the active site.

Heterodimer of HisH and HisF.

The protein localises to the cytoplasm. The catalysed reaction is 5-[(5-phospho-1-deoxy-D-ribulos-1-ylimino)methylamino]-1-(5-phospho-beta-D-ribosyl)imidazole-4-carboxamide + L-glutamine = D-erythro-1-(imidazol-4-yl)glycerol 3-phosphate + 5-amino-1-(5-phospho-beta-D-ribosyl)imidazole-4-carboxamide + L-glutamate + H(+). It carries out the reaction L-glutamine + H2O = L-glutamate + NH4(+). It participates in amino-acid biosynthesis; L-histidine biosynthesis; L-histidine from 5-phospho-alpha-D-ribose 1-diphosphate: step 5/9. In terms of biological role, IGPS catalyzes the conversion of PRFAR and glutamine to IGP, AICAR and glutamate. The HisH subunit catalyzes the hydrolysis of glutamine to glutamate and ammonia as part of the synthesis of IGP and AICAR. The resulting ammonia molecule is channeled to the active site of HisF. The chain is Imidazole glycerol phosphate synthase subunit HisH from Synechococcus sp. (strain CC9902).